The primary structure comprises 234 residues: Peptidyl-tRNA hydrolase (234 aa).

Tyr14 is a binding site for tRNA. Catalysis depends on His19, which acts as the Proton acceptor. TRNA-binding residues include Phe64, Asn66, and Asn112. Positions 187 to 234 are disordered; the sequence is TGTKADEEKPKPAKSHIHQARNGVQPKKLPETGPMAEMLKKMFGPKKD.

Belongs to the PTH family. Monomer.

It localises to the cytoplasm. It carries out the reaction an N-acyl-L-alpha-aminoacyl-tRNA + H2O = an N-acyl-L-amino acid + a tRNA + H(+). In terms of biological role, hydrolyzes ribosome-free peptidyl-tRNAs (with 1 or more amino acids incorporated), which drop off the ribosome during protein synthesis, or as a result of ribosome stalling. Functionally, catalyzes the release of premature peptidyl moieties from peptidyl-tRNA molecules trapped in stalled 50S ribosomal subunits, and thus maintains levels of free tRNAs and 50S ribosomes. The protein is Peptidyl-tRNA hydrolase of Allorhizobium ampelinum (strain ATCC BAA-846 / DSM 112012 / S4) (Agrobacterium vitis (strain S4)).